The primary structure comprises 104 residues: Protein S100-A14 (104 aa).

Residues K27 to N61 enclose the EF-hand domain.

The protein belongs to the S-100 family. In terms of assembly, homodimer. Interacts with AGER. In terms of tissue distribution, expressed at highest levels in colon and at moderate levels in thymus, kidney, liver, small intestine, and lung. Low expression in heart and no expression is seen in brain, skeletal muscle, spleen, placenta and peripheral blood leukocytes.

It localises to the cytoplasm. Modulates P53/TP53 protein levels, and thereby plays a role in the regulation of cell survival and apoptosis. Depending on the context, it can promote cell proliferation or apoptosis. Plays a role in the regulation of cell migration by modulating the levels of MMP2, a matrix protease that is under transcriptional control of P53/TP53. Does not bind calcium. In Homo sapiens (Human), this protein is Protein S100-A14 (S100A14).